The primary structure comprises 440 residues: MGGLRLLAVALTCCWWPQGSQGKTLRGSFSSTAAQDAQGQRIGHFEFHGDHALLCVRINNIAVAVGKEAKLYLFQAQEWLKLQQSSHGYSCSEKLSKAQLTMTMNQTEHNLTVSQIPSPQTWHVFYADKYTCQDDKENSQVEDIPFEMVLLNPDAEGNPFDHFSAGESGLHEFFFLLVLVYFVIACIYAQSLWQAIKKGGPMHMILKVLTTALLLQAGSALANYIHFSSYSKDGIGVPFMGSLAEFFDIASQIQMLYLLLSLCMGWTIVRMKKSQSRPLQWDSTPASTGIAVFIVMTQSVLLLWEQFEDISHHSYHSHHNLAGILLIVLRICLALSLGCGLYQIITVERSTLKREFYITFAKGCILWFLCHPVLACISVIFSDYQRDKVITIGVILCQSVSMVILYRLFLSHSLYWEVSSLSSVTLPLTISSGHKSRPHF.

The first 22 residues, 1-22, serve as a signal peptide directing secretion; it reads MGGLRLLAVALTCCWWPQGSQG. Asn105 and Asn110 each carry an N-linked (GlcNAc...) asparagine glycan. The next 7 membrane-spanning stretches (helical) occupy residues 173 to 193, 202 to 222, 249 to 269, 284 to 304, 321 to 341, 360 to 380, and 389 to 409; these read FFFL…QSLW, MHMI…SALA, IASQ…WTIV, TPAS…LLLW, LAGI…GCGL, FAKG…ISVI, and VITI…YRLF.

The protein localises to the membrane. In Homo sapiens (Human), this protein is Integral membrane protein GPR180 (GPR180).